A 310-amino-acid chain; its full sequence is Ribonuclease HIII (310 aa).

The RNase H type-2 domain occupies 91–307; sequence YNCIGSDEAG…REKAQNLVTK (217 aa). 3 residues coordinate a divalent metal cation: Asp97, Glu98, and Asp202.

This sequence belongs to the RNase HII family. RnhC subfamily. The cofactor is Mn(2+). Requires Mg(2+) as cofactor.

The protein resides in the cytoplasm. The catalysed reaction is Endonucleolytic cleavage to 5'-phosphomonoester.. In terms of biological role, endonuclease that specifically degrades the RNA of RNA-DNA hybrids. This Staphylococcus haemolyticus (strain JCSC1435) protein is Ribonuclease HIII.